The sequence spans 379 residues: Caffeyl-CoA reductase-Etf complex subunit CarC (379 aa).

FAD-binding positions include 122–131 and 155–157; these read FALTEPGAGS and FIT. Residue serine 131 participates in substrate binding. Substrate is bound at residue 239-242; that stretch reads DVGR. Residues arginine 267, glutamine 278, and 335 to 339 contribute to the FAD site; that span reads QIHGG. The active-site Proton acceptor is glutamate 362. Glycine 363 is a substrate binding site. 364–366 lines the FAD pocket; it reads TSQ.

This sequence belongs to the acyl-CoA dehydrogenase family. As to quaternary structure, part of the homotrimeric caffeyl-CoA reductase-Etf complex composed of (R)-2-hydroxyisocaproyl-CoA dehydratase CarC, and the electron transfer flavoprotein (ETF) alpha (CarE) and beta (CarD) subunits. FAD is required as a cofactor.

The protein resides in the cytoplasm. It carries out the reaction hydrocaffeoyl-CoA + 2 reduced [2Fe-2S]-[ferredoxin] + 2 NAD(+) = (E)-caffeoyl-CoA + 2 oxidized [2Fe-2S]-[ferredoxin] + 2 NADH. Its function is as follows. The Caffeyl-CoA reductase-Etf complex catalyzes the reduction of caffeyl-CoA to yield hydrocaffeyl-CoA. It couples the endergonic ferredoxin reduction with NADH as reductant to the exergonic reduction of caffeoyl-CoA with the same reductant. It uses the mechanism of electron bifurcation to overcome the steep energy barrier in ferredoxin reduction. Also reduces 4-coumaroyl-CoA and feruloyl-CoA. The sequence is that of Caffeyl-CoA reductase-Etf complex subunit CarC from Acetobacterium woodii (strain ATCC 29683 / DSM 1030 / JCM 2381 / KCTC 1655 / WB1).